We begin with the raw amino-acid sequence, 610 residues long: E-selectin (610 aa).

A signal peptide spans Met1–Ala21. The 117-residue stretch at Trp22 to Tyr138 folds into the C-type lectin domain. The Extracellular portion of the chain corresponds to Trp22–Pro555. An N-linked (GlcNAc...) asparagine glycan is attached at Asn30. Disulfide bonds link Cys40/Cys137, Cys110/Cys129, Cys142/Cys153, Cys147/Cys162, Cys164/Cys173, Cys179/Cys223, Cys192/Cys205, Cys209/Cys236, Cys241/Cys285, Cys254/Cys267, Cys271/Cys298, Cys303/Cys348, Cys334/Cys361, Cys366/Cys411, Cys397/Cys424, Cys429/Cys474, Cys460/Cys487, Cys492/Cys533, and Cys519/Cys546. Ca(2+)-binding residues include Glu101, Asn103, and Glu108. A carbohydrate is bound by residues Glu101 to Glu108, Glu112 to Arg117, and Asn125 to Glu127. The Ca(2+) site is built by Asn125 and Asp126. One can recognise an EGF-like domain in the interval Thr139–Glu174. A glycan (N-linked (GlcNAc...) asparagine) is linked at Asn159. 6 consecutive Sushi domains span residues Val177–Val238, Val239–Ala300, Val314–Ala363, Gln365–Ala426, Arg428–Val489, and Val490–Ala548. N-linked (GlcNAc...) asparagine glycosylation is found at Asn198 and Asn202. Asn264 is a glycosylation site (N-linked (GlcNAc...) asparagine). 3 N-linked (GlcNAc...) asparagine glycosylation sites follow: Asn315, Asn327, and Asn331. Asn526 carries an N-linked (GlcNAc...) asparagine glycan. The helical transmembrane segment at Leu556 to Leu577 threads the bilayer. The Cytoplasmic portion of the chain corresponds to Leu578–Ala610.

This sequence belongs to the selectin/LECAM family. Interacts with SELPLG/PSGL1 and PODXL2 through the sialyl Lewis X epitope. SELPLG sulfation appears not to be required for this interaction.

It is found in the cell membrane. Functionally, cell-surface glycoprotein having a role in immunoadhesion. Mediates in the adhesion of blood neutrophils in cytokine-activated endothelium through interaction with SELPLG/PSGL1. May have a role in capillary morphogenesis. The sequence is that of E-selectin (SELE) from Equus caballus (Horse).